Consider the following 500-residue polypeptide: NADH-quinone oxidoreductase subunit N (500 aa).

Transmembrane regions (helical) follow at residues 13-33 (VMMP…IDLF), 42-62 (LLGL…LSLW), 79-99 (FAKS…LLSI), 111-131 (GEFY…ASSG), 133-153 (LITL…LVAI), 168-188 (VITG…IFGF), 211-231 (YVLS…LASA), 245-265 (TTPV…VIVL), 281-301 (ASML…TMII), 321-341 (VAHA…MFEA), 342-362 (IWFY…ILQV), 386-406 (AIAM…AGFI), 424-444 (VLAS…FGIF), and 461-481 (PPGV…LGVF).

The protein belongs to the complex I subunit 2 family. NDH-1 is composed of 14 different subunits. Subunits NuoA, H, J, K, L, M, N constitute the membrane sector of the complex.

The protein resides in the cell membrane. The enzyme catalyses a quinone + NADH + 5 H(+)(in) = a quinol + NAD(+) + 4 H(+)(out). NDH-1 shuttles electrons from NADH, via FMN and iron-sulfur (Fe-S) centers, to quinones in the respiratory chain. The immediate electron acceptor for the enzyme in this species is believed to be a menaquinone. Couples the redox reaction to proton translocation (for every two electrons transferred, four hydrogen ions are translocated across the cytoplasmic membrane), and thus conserves the redox energy in a proton gradient. This is NADH-quinone oxidoreductase subunit N from Anoxybacillus flavithermus (strain DSM 21510 / WK1).